Here is a 953-residue protein sequence, read N- to C-terminus: Isoleucine--tRNA ligase (953 aa).

The 'HIGH' region motif lies at Pro57–His67. Residue Glu582 coordinates L-isoleucyl-5'-AMP. The short motif at Lys623–Ser627 is the 'KMSKS' region element. Lys626 lines the ATP pocket. Zn(2+) contacts are provided by Cys916, Cys919, Cys936, and Cys939.

Belongs to the class-I aminoacyl-tRNA synthetase family. IleS type 1 subfamily. As to quaternary structure, monomer. It depends on Zn(2+) as a cofactor.

It is found in the cytoplasm. It carries out the reaction tRNA(Ile) + L-isoleucine + ATP = L-isoleucyl-tRNA(Ile) + AMP + diphosphate. Catalyzes the attachment of isoleucine to tRNA(Ile). As IleRS can inadvertently accommodate and process structurally similar amino acids such as valine, to avoid such errors it has two additional distinct tRNA(Ile)-dependent editing activities. One activity is designated as 'pretransfer' editing and involves the hydrolysis of activated Val-AMP. The other activity is designated 'posttransfer' editing and involves deacylation of mischarged Val-tRNA(Ile). This is Isoleucine--tRNA ligase from Bordetella parapertussis (strain 12822 / ATCC BAA-587 / NCTC 13253).